We begin with the raw amino-acid sequence, 467 residues long: Probable apyrase 2 (467 aa).

Over Met-1 to Arg-25 the chain is Cytoplasmic. A helical; Signal-anchor for type II membrane protein membrane pass occupies residues Gly-26–Pro-46. Residues Arg-47 to Ser-467 lie on the Extracellular side of the membrane. Val-70–Arg-80 serves as a coordination point for ATP. Catalysis depends on Glu-192, which acts as the Proton acceptor. Residue Gly-216–Gln-226 coordinates ATP.

The protein belongs to the GDA1/CD39 NTPase family. The cofactor is Ca(2+).

Its subcellular location is the membrane. The enzyme catalyses a ribonucleoside 5'-triphosphate + 2 H2O = a ribonucleoside 5'-phosphate + 2 phosphate + 2 H(+). In terms of biological role, catalyzes the hydrolysis of phosphoanhydride bonds of nucleoside tri- and di-phosphates. The chain is Probable apyrase 2 (APY2) from Oryza sativa subsp. japonica (Rice).